The chain runs to 553 residues: Membrane protein insertase YidC (553 aa).

The helical transmembrane segment at Leu-6–Phe-26 threads the bilayer. Residues Asn-34–Pro-59 are disordered. Positions Gln-38 to Pro-59 are enriched in low complexity. The next 5 membrane-spanning stretches (helical) occupy residues Leu-331–Leu-351, Asn-360–Thr-380, Val-424–Tyr-444, Ile-477–Gln-497, and Ile-512–Val-532.

Belongs to the OXA1/ALB3/YidC family. Type 1 subfamily. Interacts with the Sec translocase complex via SecD. Specifically interacts with transmembrane segments of nascent integral membrane proteins during membrane integration.

It localises to the cell inner membrane. Its function is as follows. Required for the insertion and/or proper folding and/or complex formation of integral membrane proteins into the membrane. Involved in integration of membrane proteins that insert both dependently and independently of the Sec translocase complex, as well as at least some lipoproteins. Aids folding of multispanning membrane proteins. This chain is Membrane protein insertase YidC, found in Syntrophobacter fumaroxidans (strain DSM 10017 / MPOB).